Reading from the N-terminus, the 85-residue chain is Beta-insect depressant toxin Lqh-dprIT3b (85 aa).

Residues 1-21 form the signal peptide; sequence MKLLLLLTISASMLIEGLVNA. One can recognise an LCN-type CS-alpha/beta domain in the interval 22-82; that stretch reads DGYIRGGDGC…EWDYETNTCG (61 aa). Disulfide bonds link cysteine 31–cysteine 81, cysteine 35–cysteine 56, cysteine 42–cysteine 63, and cysteine 46–cysteine 65. Glycine amide is present on glycine 82.

It belongs to the long (4 C-C) scorpion toxin superfamily. Sodium channel inhibitor family. Beta subfamily. In terms of tissue distribution, expressed by the venom gland.

It localises to the secreted. Depressant insect beta-toxins cause a transient contraction paralysis followed by a slow flaccid paralysis. They bind voltage-independently at site-4 of sodium channels (Nav) and block action potentials, primarily by depolarizing the axonal membrane and suppressing the sodium current. This depressant toxin is active only on insects. It is found in a relatively small amount in the venom, and its activity on insects is 10-fold higher compared to other known depressant toxins. The polypeptide is Beta-insect depressant toxin Lqh-dprIT3b (Leiurus hebraeus (Hebrew deathstalker scorpion)).